The chain runs to 359 residues: DNA polymerase IV (359 aa).

Residues 4-185 form the UmuC domain; sequence IIHVDMDCFF…LALIKIPGVG (182 aa). 2 residues coordinate Mg(2+): Asp8 and Asp103. Residue Glu104 is part of the active site.

It belongs to the DNA polymerase type-Y family. Monomer. It depends on Mg(2+) as a cofactor.

The protein localises to the cytoplasm. The enzyme catalyses DNA(n) + a 2'-deoxyribonucleoside 5'-triphosphate = DNA(n+1) + diphosphate. In terms of biological role, poorly processive, error-prone DNA polymerase involved in untargeted mutagenesis. Copies undamaged DNA at stalled replication forks, which arise in vivo from mismatched or misaligned primer ends. These misaligned primers can be extended by PolIV. Exhibits no 3'-5' exonuclease (proofreading) activity. May be involved in translesional synthesis, in conjunction with the beta clamp from PolIII. The protein is DNA polymerase IV of Shewanella loihica (strain ATCC BAA-1088 / PV-4).